Here is a 560-residue protein sequence, read N- to C-terminus: Probable pectinesterase/pectinesterase inhibitor 20 (560 aa).

A signal peptide spans 1–24; sequence MSQKLMFLFTLACLSSLPSPFISA. The segment at 25–179 is pectinesterase inhibitor 20; sequence QIPAIGNATS…TKLYGVSLAL (155 aa). N-linked (GlcNAc...) asparagine glycans are attached at residues asparagine 31, asparagine 168, asparagine 251, asparagine 255, asparagine 268, asparagine 307, and asparagine 314. The segment at 246–544 is pectinesterase 20; sequence VTVIQNGTGN…FTVTNFLVGE (299 aa). A substrate-binding site is contributed by threonine 323. An N-linked (GlcNAc...) asparagine glycan is attached at asparagine 340. Glutamine 353 lines the substrate pocket. Catalysis depends on aspartate 376, which acts as the Proton donor; for pectinesterase activity. Cysteine 390 and cysteine 410 are joined by a disulfide. Aspartate 397 acts as the Nucleophile; for pectinesterase activity in catalysis. The disordered stretch occupies residues 417–441; it reads PRKGQSNEVTAQGRTDPNQNTGTAI. The span at 419–439 shows a compositional bias: polar residues; that stretch reads KGQSNEVTAQGRTDPNQNTGT. The N-linked (GlcNAc...) asparagine glycan is linked to asparagine 456. Substrate contacts are provided by arginine 465 and tryptophan 467. Residues asparagine 507, asparagine 528, and asparagine 534 are each glycosylated (N-linked (GlcNAc...) asparagine).

In the N-terminal section; belongs to the PMEI family. The protein in the C-terminal section; belongs to the pectinesterase family. As to expression, expressed in flower buds.

Its subcellular location is the secreted. The protein resides in the cell wall. It catalyses the reaction [(1-&gt;4)-alpha-D-galacturonosyl methyl ester](n) + n H2O = [(1-&gt;4)-alpha-D-galacturonosyl](n) + n methanol + n H(+). It participates in glycan metabolism; pectin degradation; 2-dehydro-3-deoxy-D-gluconate from pectin: step 1/5. Its function is as follows. Acts in the modification of cell walls via demethylesterification of cell wall pectin. This chain is Probable pectinesterase/pectinesterase inhibitor 20 (PME20), found in Arabidopsis thaliana (Mouse-ear cress).